The sequence spans 231 residues: 2-amino-5-formylamino-6-ribosylaminopyrimidin-4(3H)-one 5'-monophosphate deformylase (231 aa).

The Fe cation site is built by glutamate 29, histidine 31, aspartate 40, and histidine 110.

This sequence belongs to the creatininase superfamily. FAPy deformylase family. As to quaternary structure, homodimer. Fe(2+) serves as cofactor. The cofactor is Zn(2+).

The enzyme catalyses 2-amino-5-formylamino-6-(5-phospho-D-ribosylamino)pyrimidin-4(3H)-one + H2O = 2,5-diamino-6-(1-D-ribosylamino)pyrimidin-4(3H)-one 5'-phosphate + formate + H(+). Its pathway is cofactor biosynthesis; coenzyme F420 biosynthesis. It functions in the pathway cofactor biosynthesis; riboflavin biosynthesis. Functionally, catalyzes the hydrolysis of the formamide of 2-amino-5-formylamino-6-ribosylamino-4(3H)-pyrimidinone 5'-monophosphate (FAPy) to form 2,5-diamino-6-ribosylamino-4(3H)-pyrimidinone 5'-phosphate (APy). This chain is 2-amino-5-formylamino-6-ribosylaminopyrimidin-4(3H)-one 5'-monophosphate deformylase, found in Methanothermobacter marburgensis (strain ATCC BAA-927 / DSM 2133 / JCM 14651 / NBRC 100331 / OCM 82 / Marburg) (Methanobacterium thermoautotrophicum).